We begin with the raw amino-acid sequence, 161 residues long: C-type lectin lectoxin-Lio3 (161 aa).

The first 23 residues, 1–23 (MRRFIFMSLGLLVLAFSLSGIGA), serve as a signal peptide directing secretion. 3 cysteine pairs are disulfide-bonded: Cys-27/Cys-38, Cys-55/Cys-154, and Cys-129/Cys-146. The region spanning 34–155 (HNISCYKLFT…CGLLHYFICQ (122 aa)) is the C-type lectin domain. A glycan (N-linked (GlcNAc...) asparagine) is linked at Asn-35. The Mannose-binding signature appears at 117–119 (KGE). Glu-127, Asn-142, and Asp-143 together coordinate Ca(2+).

The protein belongs to the true venom lectin family. Expressed by the venom gland.

The protein localises to the secreted. Mannose-binding lectin which recognizes specific carbohydrate structures and agglutinates a variety of animal cells by binding to cell-surface glycoproteins and glycolipids. May be a calcium-dependent lectin. In Erythrolamprus poecilogyrus (Water snake), this protein is C-type lectin lectoxin-Lio3.